The sequence spans 279 residues: Putative F-box protein At1g50880 (279 aa).

Positions 19 to 69 constitute an F-box domain; sequence SSSMSSIPLDVTSKILAKLPAKSVLRARCVSKQWSSISTDPYFISNMFPKQ.

The polypeptide is Putative F-box protein At1g50880 (Arabidopsis thaliana (Mouse-ear cress)).